Here is a 546-residue protein sequence, read N- to C-terminus: MAAKEVKFGDSARKKMLVGVNVLADAVKATLGPKGRNVVLDKSFGAPTITKDGVSVAKEIELKDKFENMGAQLVKDVASKANDEAGDGTTTATVLAQAIVNEGLKAVAAGMNPMDLKRGIDKATIAIVAELKSLAKPCSDSKAIAQVGTISANSDESIGNIIAEAMNKVGKEGVITVEEGSGLENELSVVEGMQFDRGYLSPYFINKPDTMVAELDNPLLLLVDKKISNIRELLPVLEAVAKSGRPLLIVAEDVEGEALATLVVNNMRGIVKVAAVKAPGFNDRRKAMLQVIAILTGATVISEKVGLSLESATLEHLGKPKALVLNKENTTIMHGAGAQADIEAAVAQIRKQIEETSSDYDREKLQERLAKLAGGVAVIKVGAATEVEMKEKKARVEAALHATRAAVEEGVVPGGGVALVRALQAIEGLKGDNEDQNVGIALLRRAVEAPLRQIVANAGDEPSVVVDKVKQGSGNFGFNAASGVYGDMIEMGILDPAKVTRSALQAASSIGGLMITTEAMVADIVEDKAAPAMPDMGGMGGMGGMM.

Residues 30-33, lysine 51, 87-91, glycine 415, 479-481, and aspartate 495 contribute to the ATP site; these read TLGP, DGTTT, and NAA.

Belongs to the chaperonin (HSP60) family. Forms a cylinder of 14 subunits composed of two heptameric rings stacked back-to-back. Interacts with the co-chaperonin GroES.

The protein resides in the cytoplasm. It catalyses the reaction ATP + H2O + a folded polypeptide = ADP + phosphate + an unfolded polypeptide.. In terms of biological role, together with its co-chaperonin GroES, plays an essential role in assisting protein folding. The GroEL-GroES system forms a nano-cage that allows encapsulation of the non-native substrate proteins and provides a physical environment optimized to promote and accelerate protein folding. The chain is Chaperonin GroEL from Azotobacter vinelandii.